The following is a 559-amino-acid chain: Transcription factor tstO (559 aa).

Residues 23–50 constitute a DNA-binding region (zn(2)-C6 fungal-type); the sequence is CDACQSAKVRCGREKPTCRRCQNQGKTC. 2 disordered regions span residues 166–316 and 453–477; these read GPST…TGFS and ASPP…ISTA. The span at 222–232 shows a compositional bias: low complexity; it reads SSESLSLEPSS. A compositionally biased stretch (polar residues) spans 255-267; sequence TRGSQKISPNPHS. The segment covering 268–279 has biased composition (basic and acidic residues); the sequence is IDSRTSSRDKSF. Composition is skewed to low complexity over residues 286-316 and 462-477; these read STLG…TGFS and NNNT…ISTA.

The protein localises to the nucleus. Functionally, transcription factore; part of the gene cluster that mediates the biosynthesis of the antihypercholesterolemic agents phomoidrides which are dimeric anhydrides. Probably regulates the expression of the genes from the cluster. The chain is Transcription factor tstO from Talaromyces stipitatus (strain ATCC 10500 / CBS 375.48 / QM 6759 / NRRL 1006) (Penicillium stipitatum).